Reading from the N-terminus, the 510-residue chain is Proline--tRNA ligase (510 aa).

Belongs to the class-II aminoacyl-tRNA synthetase family. ProS type 3 subfamily. Homodimer.

It localises to the cytoplasm. It carries out the reaction tRNA(Pro) + L-proline + ATP = L-prolyl-tRNA(Pro) + AMP + diphosphate. In terms of biological role, catalyzes the attachment of proline to tRNA(Pro) in a two-step reaction: proline is first activated by ATP to form Pro-AMP and then transferred to the acceptor end of tRNA(Pro). This Sphingomonas elodea protein is Proline--tRNA ligase.